A 249-amino-acid polypeptide reads, in one-letter code: Methionine aminopeptidase (249 aa).

H77 provides a ligand contact to substrate. Positions 94, 105, and 168 each coordinate a divalent metal cation. H175 serves as a coordination point for substrate. Positions 201 and 232 each coordinate a divalent metal cation.

The protein belongs to the peptidase M24A family. Methionine aminopeptidase type 1 subfamily. As to quaternary structure, monomer. Co(2+) serves as cofactor. The cofactor is Zn(2+). Mn(2+) is required as a cofactor. Requires Fe(2+) as cofactor.

The catalysed reaction is Release of N-terminal amino acids, preferentially methionine, from peptides and arylamides.. Its function is as follows. Removes the N-terminal methionine from nascent proteins. The N-terminal methionine is often cleaved when the second residue in the primary sequence is small and uncharged (Met-Ala-, Cys, Gly, Pro, Ser, Thr, or Val). Requires deformylation of the N(alpha)-formylated initiator methionine before it can be hydrolyzed. The chain is Methionine aminopeptidase from Clostridium perfringens (strain 13 / Type A).